The chain runs to 438 residues: Coenzyme A disulfide reductase (438 aa).

8-33 (GAVAGGATCASQIRRLDKESDIIIFE) lines the FAD pocket. Threonine 15, glutamine 19, arginine 22, serine 39, and asparagine 42 together coordinate substrate. The active-site Nucleophile is cysteine 43. The active-site Redox-active is the cysteine 43. Lysine 71 contacts substrate. 151-166 (VLVVGAGYVSLEVLEN) serves as a coordination point for NADP(+). 267 to 277 (TNVPNIYVIGD) contributes to the FAD binding site. Position 299 (histidine 299) interacts with substrate. Position 419 (tyrosine 419) interacts with FAD. Lysine 427 serves as a coordination point for substrate.

Belongs to the class-III pyridine nucleotide-disulfide oxidoreductase family. In terms of assembly, homodimer. Requires FAD as cofactor.

It catalyses the reaction NADP(+) + 2 CoA = CoA-disulfide + NADPH + H(+). Catalyzes specifically the NADPH-dependent reduction of coenzyme A disulfide. The chain is Coenzyme A disulfide reductase from Staphylococcus aureus (strain MRSA252).